Consider the following 103-residue polypeptide: Large ribosomal subunit protein bL21 (103 aa).

This sequence belongs to the bacterial ribosomal protein bL21 family. Part of the 50S ribosomal subunit. Contacts protein L20.

In terms of biological role, this protein binds to 23S rRNA in the presence of protein L20. In Tolumonas auensis (strain DSM 9187 / NBRC 110442 / TA 4), this protein is Large ribosomal subunit protein bL21.